Consider the following 523-residue polypeptide: Anthranilate synthase component 1 (523 aa).

L-tryptophan contacts are provided by residues Ser45 and 296–298; that span reads PYM. 333–334 contributes to the chorismate binding site; sequence GT. Glu366 serves as a coordination point for Mg(2+). Residues Tyr454, Arg474, 488–490, and Gly490 contribute to the chorismate site; that span reads GAG. Mg(2+) is bound at residue Glu503.

This sequence belongs to the anthranilate synthase component I family. As to quaternary structure, heterotetramer consisting of two non-identical subunits: a beta subunit (TrpG) and a large alpha subunit (TrpE). It depends on Mg(2+) as a cofactor.

The catalysed reaction is chorismate + L-glutamine = anthranilate + pyruvate + L-glutamate + H(+). It functions in the pathway amino-acid biosynthesis; L-tryptophan biosynthesis; L-tryptophan from chorismate: step 1/5. With respect to regulation, feedback inhibited by tryptophan. Its function is as follows. Part of a heterotetrameric complex that catalyzes the two-step biosynthesis of anthranilate, an intermediate in the biosynthesis of L-tryptophan. In the first step, the glutamine-binding beta subunit (TrpG) of anthranilate synthase (AS) provides the glutamine amidotransferase activity which generates ammonia as a substrate that, along with chorismate, is used in the second step, catalyzed by the large alpha subunit of AS (TrpE) to produce anthranilate. In the absence of TrpG, TrpE can synthesize anthranilate directly from chorismate and high concentrations of ammonia. This chain is Anthranilate synthase component 1 (trpE), found in Vibrio cholerae serotype O1 (strain ATCC 39315 / El Tor Inaba N16961).